Reading from the N-terminus, the 293-residue chain is Ribosomal protein L11 methyltransferase (293 aa).

Positions 145, 166, 188, and 230 each coordinate S-adenosyl-L-methionine.

This sequence belongs to the methyltransferase superfamily. PrmA family.

The protein localises to the cytoplasm. It catalyses the reaction L-lysyl-[protein] + 3 S-adenosyl-L-methionine = N(6),N(6),N(6)-trimethyl-L-lysyl-[protein] + 3 S-adenosyl-L-homocysteine + 3 H(+). In terms of biological role, methylates ribosomal protein L11. This is Ribosomal protein L11 methyltransferase from Shewanella putrefaciens (strain CN-32 / ATCC BAA-453).